Consider the following 232-residue polypeptide: Ornithine carbamoyltransferase (232 aa).

Carbamoyl phosphate-binding positions include glutamine 15, arginine 39, and 66 to 69 (HPTQ). Residues asparagine 99, aspartate 163, and 167 to 168 (SM) each bind L-ornithine. Carbamoyl phosphate is bound by residues 204–207 (HCLP) and threonine 232.

This sequence belongs to the aspartate/ornithine carbamoyltransferase superfamily. OTCase family.

The protein resides in the cytoplasm. The enzyme catalyses carbamoyl phosphate + L-ornithine = L-citrulline + phosphate + H(+). It functions in the pathway amino-acid biosynthesis; L-arginine biosynthesis; L-arginine from L-ornithine and carbamoyl phosphate: step 1/3. In terms of biological role, reversibly catalyzes the transfer of the carbamoyl group from carbamoyl phosphate (CP) to the N(epsilon) atom of ornithine (ORN) to produce L-citrulline. The polypeptide is Ornithine carbamoyltransferase (argF) (Neisseria subflava).